Reading from the N-terminus, the 166-residue chain is UPF0178 protein BPUM_2255 (166 aa).

Belongs to the UPF0178 family.

The protein is UPF0178 protein BPUM_2255 of Bacillus pumilus (strain SAFR-032).